The chain runs to 263 residues: (2Z,6E)-farnesyl diphosphate synthase (263 aa).

The active site involves Asp40. Position 40 (Asp40) interacts with Mg(2+). Substrate-binding positions include Gly41–Arg44, Trp45, and Ser86–Glu88. The active-site Proton acceptor is the Asn89. Residues Arg92, Arg212, and Arg218–Ser220 contribute to the substrate site. Glu231 lines the Mg(2+) pocket.

It belongs to the UPP synthase family. Z-FPP synthase subfamily. As to quaternary structure, homodimer. The cofactor is Mg(2+).

It is found in the cell membrane. The enzyme catalyses isopentenyl diphosphate + (2E)-geranyl diphosphate = (2Z,6E)-farnesyl diphosphate + diphosphate. Catalyzes the condensation of only one isopentenyl pyrophosphate (IPP) unit in the cis configuration to E-geranyl diphosphate (E-GPP) generating the 15 carbon product (2Z,6E)-farnesyl diphosphate (Z-FPP or EZ-FPP). Z-FPP is the precursor of decaprenyl diphosphate, which has a central role in the biosynthesis of the mycobacterial cell wall. This chain is (2Z,6E)-farnesyl diphosphate synthase (uppS), found in Mycolicibacterium smegmatis (strain ATCC 700084 / mc(2)155) (Mycobacterium smegmatis).